We begin with the raw amino-acid sequence, 217 residues long: Ribosomal RNA small subunit methyltransferase G (217 aa).

Residues glycine 78, phenylalanine 83, 129–130, and arginine 146 contribute to the S-adenosyl-L-methionine site; that span reads AE.

It belongs to the methyltransferase superfamily. RNA methyltransferase RsmG family.

Its subcellular location is the cytoplasm. The enzyme catalyses guanosine(527) in 16S rRNA + S-adenosyl-L-methionine = N(7)-methylguanosine(527) in 16S rRNA + S-adenosyl-L-homocysteine. Specifically methylates the N7 position of guanine in position 527 of 16S rRNA. The protein is Ribosomal RNA small subunit methyltransferase G of Geobacter sp. (strain M21).